Reading from the N-terminus, the 146-residue chain is Leghemoglobin-3 (146 aa).

The Globin domain maps to 2-146; sequence GFTDKQEALV…LATAIKKAMV (145 aa). Position 29 is a nitrated tyrosine (tyrosine 29). Serine 44 serves as a coordination point for heme b. The residue at position 44 (serine 44) is a Phosphoserine. Histidine 61 provides a ligand contact to O2. Residues lysine 64, histidine 93, and lysine 96 each contribute to the heme b site. Tyrosine 134 bears the Nitrated tyrosine mark.

Belongs to the plant globin family. In terms of assembly, monomer. Post-translationally, nitrated in effective nodules and particularly in hypoxic conditions; this mechanism may play a protective role in the symbiosis by buffering toxic peroxynitrite NO(2)(-). Nitration level decrease during nodule senescence. Phosphorylation at Ser-44 disrupts the molecular environment of its porphyrin ring oxygen binding pocket, thus leading to a reduced oxygen consumption and to the delivery of oxygen O(2) to symbiosomes. Root nodules.

It is found in the cytoplasm. The protein resides in the cytosol. It localises to the nucleus. Functionally, leghemoglobin that reversibly binds oxygen O(2) through a pentacoordinated heme iron. In root nodules, facilitates the diffusion of oxygen to the bacteroids while preventing the bacterial nitrogenase from being inactivated by buffering dioxygen, nitric oxide and carbon monoxide, and promoting the formation of reactive oxygen species (ROS, e.g. H(2)O(2)). This role is essential for symbiotic nitrogen fixation (SNF). This is Leghemoglobin-3 from Medicago sativa (Alfalfa).